A 491-amino-acid chain; its full sequence is 1-aminocyclopropane-1-carboxylate synthase (491 aa).

Residue Lys278 is modified to N6-(pyridoxal phosphate)lysine.

It belongs to the class-I pyridoxal-phosphate-dependent aminotransferase family. As to quaternary structure, homodimer. It depends on pyridoxal 5'-phosphate as a cofactor.

It carries out the reaction S-adenosyl-L-methionine = 1-aminocyclopropane-1-carboxylate + S-methyl-5'-thioadenosine + H(+). Its pathway is alkene biosynthesis; ethylene biosynthesis via S-adenosyl-L-methionine; ethylene from S-adenosyl-L-methionine: step 1/2. In terms of biological role, catalyzes the formation of 1-aminocyclopropane-1-carboxylate, a direct precursor of ethylene in higher plants. The polypeptide is 1-aminocyclopropane-1-carboxylate synthase (ACS1) (Nicotiana tabacum (Common tobacco)).